The primary structure comprises 153 residues: UPF0266 membrane protein SG1324 (153 aa).

Transmembrane regions (helical) follow at residues 6–26, 46–66, and 68–88; these read IGLV…EFIV, LDGL…ITTD, and KVMT…LAYI.

This sequence belongs to the UPF0266 family.

Its subcellular location is the cell inner membrane. The chain is UPF0266 membrane protein SG1324 from Sodalis glossinidius (strain morsitans).